The primary structure comprises 114 residues: MSALSLVILGLLMAVPPASCQQGLGNLQPWMQGLIAVAVFLVLVAIAFAINHFWCQEEREPMNMVMTTGNKADGILIGTEGKYSSMAASFRSNEHENAYENTSEEEGRVHSTPM.

Residues methionine 1–glutamine 28 are Extracellular-facing. The helical transmembrane segment at proline 29–asparagine 51 threads the bilayer. At histidine 52–methionine 114 the chain is on the cytoplasmic side. Serine 85 is subject to Phosphoserine. Residues serine 92–methionine 114 are disordered. Residues glutamate 105–methionine 114 show a composition bias toward basic and acidic residues.

This sequence belongs to the PDZK1-interacting protein 1/SMIM24 family. In terms of assembly, forms a heterodimer (via N-terminal transmembrane helix) with SLC5A2/SGLT2 (via TM13); this interaction enhances SLC5A2 transporter activity. Interacts with PDZK1.

It is found in the apical cell membrane. Functionally, auxiliary protein of electrogenic Na(+)-coupled sugar symporter SLC5A2/SGLT2 and SLC5A1/SGLT1. Essential for the transporter activity of SLC5A2/SGLT2 but not SLC5A1/SGLT1. This chain is PDZK1-interacting protein 1, found in Sus scrofa (Pig).